We begin with the raw amino-acid sequence, 233 residues long: MEAPAPSLTEEDLTEVKKDALENLRVYLCEKIIAERHFDHLRAKKILSREDTEEISCRTSSRKRAGKLLDYLQENPKGLDTLVESIRREKTQNFLIQKITDEVLKLRNIKLEHLKGLKCSSCEPFAAGATNNLSRSNSDESNFSEKQRPSTVIYHPEGESSTAPFFSTESSLNLPVLEVGRLENSSFSSASLPRPGDPGAPPLPPDLRLEEGGSCGNSSEMFLPLRSRALSRQ.

An N-acetylmethionine modification is found at methionine 1. The region spanning 13–101 (LTEVKKDALE…QNFLIQKITD (89 aa)) is the CARD domain. Residues lysine 17, lysine 31, and lysine 63 each participate in a glycyl lysine isopeptide (Lys-Gly) (interchain with G-Cter in ubiquitin) cross-link. Over residues 130 to 141 (TNNLSRSNSDES) the composition is skewed to polar residues. Disordered stretches follow at residues 130–149 (TNNL…KQRP) and 186–233 (SFSS…LSRQ). Position 138 is a phosphoserine (serine 138). Residues 195 to 205 (PGDPGAPPLPP) are compositionally biased toward pro residues.

As to quaternary structure, homomultimer; homooligomerized following recruitment by CARD domain-containing proteins that form a nucleating helical template that recruits BCL10 via CARD-CARD interaction. Self-associates by CARD-CARD interaction and interacts with other CARD-proteins such as CARD9, CARD10, CARD11 and CARD14. Forms a complex with CARD14 and MALT1; resulting in the formation of a CBM (CARD14-BCL10-MALT1) complex. Forms a complex with CARD11 and MALT1; resulting in the formation of a CBM (CARD11-BCL10-MALT1) complex. Forms a complex with CARD9 and MALT1; resulting in the formation of a CBM (CARD9-BCL10-MALT1) complex. Found in a membrane raft complex, at least composed of BCL10, CARD11, DPP4 and IKBKB. Binds caspase-9 with its C-terminal domain. Interacts with TRAF2 and BIRC2/c-IAP2. Interacts with PELI2 and SOCS3; these interactions may be mutually exclusive. Post-translationally, phosphorylated. Phosphorylation results in dissociation from TRAF2 and binding to BIRC2/c-IAP2. Phosphorylated by IKBKB/IKKB. Ubiquitinated via both 'Lys-63'-linked and linear ('Met-1'-linked) polyubiquitin chains in response to T-cell receptor (TCR) activation. Ubiquitination is recognized by IKBKG/NEMO, the regulatory subunit of I-kappa-B kinase (IKK), and is required for TCR-induced NF-kappa-B activation. Linear ubiquitination at Lys-17, Lys-31 and Lys-63 is mediated by RNF31/HOIP; linear ubiquitination is recognized with much higher affinity than 'Lys-63'-linked ubiquitin by IKBKG/NEMO. CARD11 is required for linear ubiquitination by HOIP by promoting the targeting of BCL10 to RNF31/HOIP. In terms of processing, proteolytically cleaved by MALT1; required for T-cell activation.

Its subcellular location is the cytoplasm. The protein resides in the perinuclear region. It localises to the membrane raft. Plays a key role in both adaptive and innate immune signaling by bridging CARD domain-containing proteins to immune activation. Acts by channeling adaptive and innate immune signaling downstream of CARD domain-containing proteins CARD9, CARD11 and CARD14 to activate NF-kappa-B and MAP kinase p38 (MAPK11, MAPK12, MAPK13 and/or MAPK14) pathways which stimulate expression of genes encoding pro-inflammatory cytokines and chemokines. Recruited by activated CARD domain-containing proteins: homooligomerized CARD domain-containing proteins form a nucleating helical template that recruits BCL10 via CARD-CARD interaction, thereby promoting polymerization of BCL10, subsequent recruitment of MALT1 and formation of a CBM complex. This leads to activation of NF-kappa-B and MAP kinase p38 (MAPK11, MAPK12, MAPK13 and/or MAPK14) pathways which stimulate expression of genes encoding pro-inflammatory cytokines and chemokines. Activated by CARD9 downstream of C-type lectin receptors; CARD9-mediated signals are essential for antifungal immunity. Activated by CARD11 downstream of T-cell receptor (TCR) and B-cell receptor (BCR). Promotes apoptosis, pro-caspase-9 maturation and activation of NF-kappa-B via NIK and IKK. This Rattus norvegicus (Rat) protein is B-cell lymphoma/leukemia 10.